The primary structure comprises 219 residues: Large ribosomal subunit protein uL16 (219 aa).

This sequence belongs to the universal ribosomal protein uL16 family. As to quaternary structure, component of the small ribosomal subunit. Mature ribosomes consist of a small (40S) and a large (60S) subunit. The 40S subunit contains about 33 different proteins and 1 molecule of RNA (18S). The 60S subunit contains about 49 different proteins and 3 molecules of RNA (25S, 5.8S and 5S).

In Encephalitozoon cuniculi (strain GB-M1) (Microsporidian parasite), this protein is Large ribosomal subunit protein uL16 (RPL10).